We begin with the raw amino-acid sequence, 217 residues long: Small ribosomal subunit protein uS3c (217 aa).

The KH type-2 domain occupies 39 to 109 (IRSCIEKQLH…QIRINLIEIT (71 aa)).

Belongs to the universal ribosomal protein uS3 family. Part of the 30S ribosomal subunit.

The protein localises to the plastid. It localises to the chloroplast. The chain is Small ribosomal subunit protein uS3c (rps3) from Gracilaria tenuistipitata var. liui (Red alga).